Consider the following 465-residue polypeptide: MSASLARGMLHKMGGSCCPHHAPTTNPFRMAKLHGNNKSTDYAFEMVCSTLRFGKGVTLEIGYDVRNLGAKKTLLITDKNVQNTIAFKNAEQALKMVNIEYEIFDDVLIEPSEKSMQKAIAFAKSKPFDSFIAVGGGSVIDTTKAAALYASNPEADFLDFVGPPFGKSLQPKNPMLPLIAVPTTAGTGSETTAAAIMDLPEHKCKTGIRLRCIKPYLAVVDPLNVMSMPRNVAIYSGFDVLCHALESYTALPYDQRSPRPARPEVRPVYQGSNPISDVWSREALRIIGQYFRRSVFDPSDEEARTEMLKASSFAGIGFGNAGVHLCHGLSYPISSQAKGCVAHDYPQDKNLIPHGLSVMTTAVADFEFTTAACPDRHLVAAQTLGADIPNNADNEYISRTLCDQLRGFMKDFGVPNGLKGMGFEYSDIDHLTEAASHSVPNIVISPKSTDRDIISKLYEKSLTVY.

The protein belongs to the iron-containing alcohol dehydrogenase family. Hydroxyacid-oxoacid transhydrogenase subfamily.

The protein resides in the mitochondrion. It catalyses the reaction (S)-3-hydroxybutanoate + 2-oxoglutarate = (R)-2-hydroxyglutarate + acetoacetate. It carries out the reaction 4-hydroxybutanoate + 2-oxoglutarate = (R)-2-hydroxyglutarate + succinate semialdehyde. Functionally, catalyzes the cofactor-independent reversible oxidation of gamma-hydroxybutyrate (GHB) to succinic semialdehyde (SSA) coupled to reduction of 2-ketoglutarate (2-KG) to D-2-hydroxyglutarate (D-2-HG). L-3-hydroxybutyrate (L-3-OHB) is also a substrate for HOT when using 2-KG as hydrogen acceptor, resulting in the formation of D-2-HG. The polypeptide is Hydroxyacid-oxoacid transhydrogenase, mitochondrial (Caenorhabditis briggsae).